We begin with the raw amino-acid sequence, 459 residues long: Chromosomal replication initiator protein DnaA (459 aa).

Residues 1-74 are domain I, interacts with DnaA modulators; the sequence is MQKIETFWYF…DEMAQGHFNE (74 aa). Positions 74–122 are domain II; sequence EKIHFKLELKDPAEIKTATIKAPEPKSKEDKKPPTDKAHGTTARKTNPS. The disordered stretch occupies residues 91-123; the sequence is ATIKAPEPKSKEDKKPPTDKAHGTTARKTNPSR. Positions 96-112 are enriched in basic and acidic residues; sequence PEPKSKEDKKPPTDKAH. The interval 123-339 is domain III, AAA+ region; it reads RLNPAFTFDA…GALKRVLAYS (217 aa). ATP is bound by residues Gly-167, Gly-169, Lys-170, and Thr-171. Residues 340–459 are domain IV, binds dsDNA; sequence RFTGHPISLD…YSTLIHILRG (120 aa).

It belongs to the DnaA family. As to quaternary structure, oligomerizes as a right-handed, spiral filament on DNA at oriC.

Its subcellular location is the cytoplasm. Functionally, plays an essential role in the initiation and regulation of chromosomal replication. ATP-DnaA binds to the origin of replication (oriC) to initiate formation of the DNA replication initiation complex once per cell cycle. Binds the DnaA box (a 9 base pair repeat at the origin) and separates the double-stranded (ds)DNA. Forms a right-handed helical filament on oriC DNA; dsDNA binds to the exterior of the filament while single-stranded (ss)DNA is stabiized in the filament's interior. The ATP-DnaA-oriC complex binds and stabilizes one strand of the AT-rich DNA unwinding element (DUE), permitting loading of DNA polymerase. After initiation quickly degrades to an ADP-DnaA complex that is not apt for DNA replication. Binds acidic phospholipids. The chain is Chromosomal replication initiator protein DnaA from Nitrosomonas eutropha (strain DSM 101675 / C91 / Nm57).